Reading from the N-terminus, the 1567-residue chain is MASQPPQPPSGQPDTQYEEYQSEVITETTNRPTPAADVYEITPTNDVMDDRYEHEHDDYESGAMYETVRTWSPQSRPELVRIASVFSRIDSHPDVAPTTEDGGQLNRRDTLAGVKIGDPVLDPTKPEFDFYKWARMFTHVMEKEGIKRNRTGVMFRNLTVLGSGSAVQYQDTFLSPFAAPFRPGELCGKGRNPEKVILHDFNGAIREGELLMVLGRPGSGCSTFLKAICGELHGLQKKKESIIHYNGVSQHTFKKELRGEAVYSAEDEHHFPHLTVGQTLEFAAAARTPSKRVLGLSRKDFSTHLARVMMSVFGLSHTYNTKVGDDYVRGVSGGERKRVSIAEIALSGAPICCWDNSTRGLDSATALEFTKALKIGSQVGGITQCLAIYQASQAIYDIFDKVIVLYEGRQIFFGPTRIAKQYFEEMGWYCPPRQTTADFLTSVTNPKERIAKEGYENRVPRTAVEFERYWKQSQNNKLLLADMDRFEAEYPPEEGHLEKLRETHGQAQAKHTASKSPYRISVPMQVKLCTVRAYQRLWGDKSSTIATNISQIMMALIIGSLFFDTPQTTDGFFAKGSVIFFAILLNGLMSITEINGLCKATDPIVPNAQRPIVVKHVNFAFYHAYSEALAGIVADIPIKFLLALVFNIIIYFLGGLERSAAKFFIFFLFTFITILTMSAIFRTLAAATKTIPQALALAGVMILALVIYTGFTLQPSYMHPWFKWILYINPIAYAYEALLVNEVHGNRYRCATPIPPYGSGTNFACAVAGAVPGEMSVSGDAWVESSYDYSYAHIWRNLGILLGFLAFFYFVYLVVSELNLSSASSAEFLVFRRGHLPKNFQGSKDEEAAAGGVMYPNDPARLPPTNTNGAAGETAPGGSTVAVIPPQKDIFTWRNVTYDITIKGEPRRLLDNISGWVRPGTLTALMGVSGAGKTTLLDALAQRTTMGVITGDMLVNGRPLDSSFQRKTGYVQQQDLHLETTTVREALRFSADLRQPKSVSRKEKYEYVEDVIKMLSMEDFSEAVVGNPGEGLNVEQRKLLTIGVELAAKPQLLLFLDEPTSGLDSQSSWSIVTFLRKLADNGQAVLSTIHQPSGILFEQFDRLLFLAKGGRTVYFGDIGKNSETLLNYFETHGAEPCGPSENPAEYMLNVVGAGPSGKSKIDWPAVWKESEESRHVQQELDRIQSETSKRNEGHGQSAEKEPGEFAMPFTSQLYCVTTRVFQQYWRTPSYIWGKLLLGLTSALFIGFSFFLQNSSMAGLQNSLFSIFMLTTIFSSLVQQIMPRFVTQRDLFEVRERPSRAYSWKVFLLANIIVEIPYQILLGIIAWASLFYPTFGAHLSSERQGILLLYCVQFFIFASTFAQMIIAGLPDAETAGGIATTMFGLMVTFNGVLQKPNALPGFWRFMWRVSPITYTVGGLAATSLHSREVKCAQNELAIFDPPSGATCAQYLQKLVEAGAPGKLYNPMSTSQCQYCPLSSGDQFLGGSEIHWSDRWRNFGIGWAYIVFNIFATVALYYLIRVRKSSGRPNRIISVITYHLSQFGTYCRAFITGRKEKCPRKREQIGKIY.

Pro residues predominate over residues Met1–Gly11. The disordered stretch occupies residues Met1–Asp37. Residues Ser22–Pro32 are compositionally biased toward polar residues. 3 N-linked (GlcNAc...) asparagine glycosylation sites follow: Asn149, Asn157, and Asn356. An ABC transporter 1 domain is found at Val167–Pro432. The next 6 membrane-spanning stretches (helical) occupy residues Ser543 to Phe563, Gly571 to Ile591, Ile636 to Leu656, Ala661 to Phe681, Ile691 to Phe711, and Leu798 to Leu818. N-linked (GlcNAc...) asparagine glycans are attached at residues Asn819, Asn895, and Asn912. Residues Phe891–Ala1134 form the ABC transporter 2 domain. Gly927–Thr934 is an ATP binding site. The tract at residues Glu1172–Pro1202 is disordered. Residues Ile1231–Leu1251 form a helical membrane-spanning segment. Asn1253 carries an N-linked (GlcNAc...) asparagine glycan. Helical transmembrane passes span Ala1257 to Val1277, Val1305 to Ala1325, Ile1345 to Ile1365, Glu1372 to Leu1392, and Gly1498 to Ile1518.

This sequence belongs to the ABC transporter superfamily. ABCG family. PDR (TC 3.A.1.205) subfamily.

The protein localises to the cell membrane. The enzyme catalyses voriconazole(in) + ATP + H2O = voriconazole(out) + ADP + phosphate + H(+). It carries out the reaction fluconazole(in) + ATP + H2O = fluconazole(out) + ADP + phosphate + H(+). It catalyses the reaction (R)-miconazole(in) + ATP + H2O = (R)-miconazole(out) + ADP + phosphate + H(+). The catalysed reaction is (S)-miconazole(in) + ATP + H2O = (S)-miconazole(out) + ADP + phosphate + H(+). In terms of biological role, pleiotropic ABC efflux transporter that may be involved in the modulation susceptibility to a wide range of unrelated cytotoxic compounds. The protein is ABC multidrug transporter MDR1 of Trichophyton equinum (strain ATCC MYA-4606 / CBS 127.97) (Horse ringworm fungus).